The following is a 490-amino-acid chain: Acetyl-coenzyme A carboxylase carboxyl transferase subunit beta, chloroplastic (490 aa).

Residues 184–203 (LNSSENEGSSRRTRTKGSDL) are disordered. One can recognise a CoA carboxyltransferase N-terminal domain in the interval 221–490 (LWVQCENCYG…PLNQKSSKIK (270 aa)). 4 residues coordinate Zn(2+): Cys-225, Cys-228, Cys-244, and Cys-247. The C4-type zinc-finger motif lies at 225 to 247 (CENCYGLNYKKFLKSKMNICEQC).

It belongs to the AccD/PCCB family. As to quaternary structure, acetyl-CoA carboxylase is a heterohexamer composed of biotin carboxyl carrier protein, biotin carboxylase and 2 subunits each of ACCase subunit alpha and ACCase plastid-coded subunit beta (accD). Requires Zn(2+) as cofactor. RNA expressed in leaf, root, stem, and tuber; the least expression occurs in stems. RNA persists even in senescent leaves.

Its subcellular location is the plastid. The protein resides in the chloroplast stroma. It catalyses the reaction N(6)-carboxybiotinyl-L-lysyl-[protein] + acetyl-CoA = N(6)-biotinyl-L-lysyl-[protein] + malonyl-CoA. The protein operates within lipid metabolism; malonyl-CoA biosynthesis; malonyl-CoA from acetyl-CoA: step 1/1. Its function is as follows. Component of the acetyl coenzyme A carboxylase (ACC) complex. Biotin carboxylase (BC) catalyzes the carboxylation of biotin on its carrier protein (BCCP) and then the CO(2) group is transferred by the transcarboxylase to acetyl-CoA to form malonyl-CoA. The sequence is that of Acetyl-coenzyme A carboxylase carboxyl transferase subunit beta, chloroplastic from Solanum tuberosum (Potato).